The primary structure comprises 73 residues: Homeodomain-only protein (73 aa).

Positions 3 to 62 (AQTASGPTEDQVEILEYNFNKVNKHPDPTTLCLIAAEAGLTEEQTQKWFKQRLAEWRRSE) form a DNA-binding region, homeobox; degenerate.

In terms of assembly, interacts with serum response factor (SRF). Component of a large complex containing histone deacetylases such as HDAC2. Interacts with the acetylated forms of HSPA1A and HSPA1B. Interacts with HSPA8. In terms of tissue distribution, expressed in the embryonic and adult heart and in the adult brain, liver, lung, skeletal muscle, intestine and spleen. Throughout embryonic and postnatal development, it is expressed in the myocardium.

The protein resides in the nucleus. It is found in the cytoplasm. In terms of biological role, atypical homeodomain protein which does not bind DNA and is required to modulate cardiac growth and development. Acts via its interaction with SRF, thereby modulating the expression of SRF-dependent cardiac-specific genes and cardiac development. Prevents SRF-dependent transcription either by inhibiting SRF binding to DNA or by recruiting histone deacetylase (HDAC) proteins that prevent transcription by SRF. Overexpression causes cardiac hypertrophy. Acts as a co-chaperone for HSPA1A and HSPA1B chaperone proteins and assists in chaperone-mediated protein refolding. In Mus musculus (Mouse), this protein is Homeodomain-only protein (Hopx).